The primary structure comprises 161 residues: Putative pre-16S rRNA nuclease (161 aa).

A disordered region spans residues 142–161 (AGSPPGALVPRNRVDPDRHA).

Belongs to the YqgF nuclease family.

Its subcellular location is the cytoplasm. Its function is as follows. Could be a nuclease involved in processing of the 5'-end of pre-16S rRNA. In Clavibacter sepedonicus (Clavibacter michiganensis subsp. sepedonicus), this protein is Putative pre-16S rRNA nuclease.